The chain runs to 126 residues: Profilin-1 (126 aa).

Belongs to the profilin family. In terms of assembly, occurs in many kinds of cells as a complex with monomeric actin in a 1:1 ratio.

It localises to the cytoplasm. Its subcellular location is the cytoskeleton. In terms of biological role, binds to actin and affects the structure of the cytoskeleton. At high concentrations, profilin prevents the polymerization of actin, whereas it enhances it at low concentrations. By binding to PIP2, it inhibits the formation of IP3 and DG. The chain is Profilin-1 (proA) from Dictyostelium discoideum (Social amoeba).